The following is a 486-amino-acid chain: Cardiolipin synthase A (486 aa).

A run of 2 helical transmembrane segments spans residues 3 to 23 (TFYT…IAGV) and 38 to 58 (MAWL…YLSV). 2 PLD phosphodiesterase domains span residues 219 to 246 (MDLR…VDPR) and 399 to 426 (EGGL…DMRS). Residues His224, Lys226, Asp231, His404, Lys406, and Asp411 contribute to the active site.

This sequence belongs to the phospholipase D family. Cardiolipin synthase subfamily. ClsA sub-subfamily.

Its subcellular location is the cell inner membrane. It carries out the reaction 2 a 1,2-diacyl-sn-glycero-3-phospho-(1'-sn-glycerol) = a cardiolipin + glycerol. In terms of biological role, catalyzes the reversible phosphatidyl group transfer from one phosphatidylglycerol molecule to another to form cardiolipin (CL) (diphosphatidylglycerol) and glycerol. The polypeptide is Cardiolipin synthase A (Salmonella choleraesuis (strain SC-B67)).